The following is a 264-amino-acid chain: MQPYLDLMRHVHEHGTDKADRTGTGTRSVFGHQMRFDLQQGFPLVTTKKVHIKSIVYELLWFLQGATNVRWLRENGVTIWDEWADAEGELGPIYGYQWRSWPTPSGEHIDQIAELIAQIKRNPDSRRLIVSAWNVADIPRMKLPPCHAFFQFYVADGKLSCQLYQRSADIFLGVPFNIASYALLTHMIAQQTGLDVGDFVWTGGDCHLYNNHFEQVETQLARTPLPLPKLHIKRKPDSIFDYRYEDFEIVGYESHPAIKAPVAV.

R21 lines the dUMP pocket. (6R)-5,10-methylene-5,6,7,8-tetrahydrofolate is bound at residue H51. 126–127 (RR) lines the dUMP pocket. The active-site Nucleophile is the C146. DUMP-binding positions include 166-169 (RSAD), N177, and 207-209 (HLY). Position 169 (D169) interacts with (6R)-5,10-methylene-5,6,7,8-tetrahydrofolate. A263 serves as a coordination point for (6R)-5,10-methylene-5,6,7,8-tetrahydrofolate.

This sequence belongs to the thymidylate synthase family. Bacterial-type ThyA subfamily. Homodimer.

Its subcellular location is the cytoplasm. It carries out the reaction dUMP + (6R)-5,10-methylene-5,6,7,8-tetrahydrofolate = 7,8-dihydrofolate + dTMP. The protein operates within pyrimidine metabolism; dTTP biosynthesis. Catalyzes the reductive methylation of 2'-deoxyuridine-5'-monophosphate (dUMP) to 2'-deoxythymidine-5'-monophosphate (dTMP) while utilizing 5,10-methylenetetrahydrofolate (mTHF) as the methyl donor and reductant in the reaction, yielding dihydrofolate (DHF) as a by-product. This enzymatic reaction provides an intracellular de novo source of dTMP, an essential precursor for DNA biosynthesis. The protein is Thymidylate synthase of Ralstonia nicotianae (strain ATCC BAA-1114 / GMI1000) (Ralstonia solanacearum).